A 423-amino-acid polypeptide reads, in one-letter code: Pentamidine resistance factor, mitochondrial (423 aa).

Residues 199–219 (PVFFTLVFIFEEVSVLIFTFF) traverse the membrane as a helical segment.

In terms of assembly, interacts with COX18. This interaction may be essential for its insertion into mitochondrial inner membrane.

Its subcellular location is the mitochondrion inner membrane. In terms of biological role, probably involved in mitochondrial export. Confers resistance to the anti-pneumocystis carinii drug pentamidine. May act by the removal of pentamidine, or its damage targets, from the matrix by an active-transport mechanism. This chain is Pentamidine resistance factor, mitochondrial (PNT1), found in Saccharomyces cerevisiae (strain ATCC 204508 / S288c) (Baker's yeast).